Reading from the N-terminus, the 480-residue chain is Endothelial transcription factor GATA-2 (480 aa).

The residue at position 73 (S73) is a Phosphoserine. An Asymmetric dimethylarginine modification is found at R86. A disordered region spans residues 119–209; it reads SPFSKTPLHP…GSAARGEDKD (91 aa). Positions 143-153 are enriched in gly residues; that stretch reads GAGGGSGGGSG. Residues 185–203 show a composition bias toward low complexity; it reads PSTTGAASPASSSAGGSAA. At S192 the chain carries Phosphoserine. GATA-type zinc fingers lie at residues 295–319 and 349–373; these read CVNC…CNAC and CANC…CNAC. K389 is covalently cross-linked (Glycyl lysine isopeptide (Lys-Gly) (interchain with G-Cter in SUMO2)). A disordered region spans residues 448-480; the sequence is HSGHILPTPTPIHPSSSLSFGHPHPSSMVTAMG.

Interacts with BRD3. Interacts with AR and CCAR1. Interacts with MDFIC. Endothelial cells.

It is found in the nucleus. Transcriptional activator which regulates endothelin-1 gene expression in endothelial cells. Binds to the consensus sequence 5'-AGATAG-3'. This chain is Endothelial transcription factor GATA-2 (GATA2), found in Homo sapiens (Human).